An 85-amino-acid chain; its full sequence is Cell division protein ZapA (85 aa).

A coiled-coil region spans residues 59 to 85 (TAVNVVHDYMKLQEKYEILERQLKEKE).

This sequence belongs to the ZapA family. Type 2 subfamily. Homodimer. Interacts with FtsZ.

Its subcellular location is the cytoplasm. Activator of cell division through the inhibition of FtsZ GTPase activity, therefore promoting FtsZ assembly into bundles of protofilaments necessary for the formation of the division Z ring. It is recruited early at mid-cell but it is not essential for cell division. The polypeptide is Cell division protein ZapA (Bacillus velezensis (strain DSM 23117 / BGSC 10A6 / LMG 26770 / FZB42) (Bacillus amyloliquefaciens subsp. plantarum)).